Reading from the N-terminus, the 352-residue chain is UDP-N-acetylglucosamine--N-acetylmuramyl-(pentapeptide) pyrophosphoryl-undecaprenol N-acetylglucosamine transferase (352 aa).

UDP-N-acetyl-alpha-D-glucosamine contacts are provided by Ser195 and Gln287.

It belongs to the glycosyltransferase 28 family. MurG subfamily.

It is found in the cell membrane. It catalyses the reaction Mur2Ac(oyl-L-Ala-gamma-D-Glu-L-Lys-D-Ala-D-Ala)-di-trans,octa-cis-undecaprenyl diphosphate + UDP-N-acetyl-alpha-D-glucosamine = beta-D-GlcNAc-(1-&gt;4)-Mur2Ac(oyl-L-Ala-gamma-D-Glu-L-Lys-D-Ala-D-Ala)-di-trans,octa-cis-undecaprenyl diphosphate + UDP + H(+). The protein operates within cell wall biogenesis; peptidoglycan biosynthesis. Its function is as follows. Cell wall formation. Catalyzes the transfer of a GlcNAc subunit on undecaprenyl-pyrophosphoryl-MurNAc-pentapeptide (lipid intermediate I) to form undecaprenyl-pyrophosphoryl-MurNAc-(pentapeptide)GlcNAc (lipid intermediate II). The chain is UDP-N-acetylglucosamine--N-acetylmuramyl-(pentapeptide) pyrophosphoryl-undecaprenol N-acetylglucosamine transferase from Streptococcus pneumoniae (strain ATCC BAA-255 / R6).